Reading from the N-terminus, the 158-residue chain is Small ribosomal subunit protein uS7 (158 aa).

This sequence belongs to the universal ribosomal protein uS7 family. Part of the 30S ribosomal subunit. Contacts proteins S9 and S11.

In terms of biological role, one of the primary rRNA binding proteins, it binds directly to 16S rRNA where it nucleates assembly of the head domain of the 30S subunit. Is located at the subunit interface close to the decoding center, probably blocks exit of the E-site tRNA. The polypeptide is Small ribosomal subunit protein uS7 (Gluconobacter oxydans (strain 621H) (Gluconobacter suboxydans)).